Here is a 345-residue protein sequence, read N- to C-terminus: Heat-inducible transcription repressor HrcA (345 aa).

This sequence belongs to the HrcA family.

In terms of biological role, negative regulator of class I heat shock genes (grpE-dnaK-dnaJ and groELS operons). Prevents heat-shock induction of these operons. This chain is Heat-inducible transcription repressor HrcA, found in Zymomonas mobilis subsp. mobilis (strain ATCC 31821 / ZM4 / CP4).